The primary structure comprises 67 residues: Medusin-S1 (67 aa).

The signal sequence occupies residues 1-22 (MSFLKKSLFLVLFLGFVSLSIC). Residues 23–48 (EEEKRETEEKENEQEDDREERSEEKR) constitute a propeptide that is removed on maturation. The tract at residues 26-47 (KRETEEKENEQEDDREERSEEK) is disordered. A compositionally biased stretch (acidic residues) spans 31 to 40 (EKENEQEDDR). Position 66 is a leucine amide (leucine 66).

This sequence belongs to the frog skin active peptide (FSAP) family. Medusin subfamily. In terms of tissue distribution, expressed by the skin glands.

The protein resides in the secreted. It is found in the target cell membrane. Antibacterial peptide with moderate activity against the Gram-positive bacteria (S.aureus ATCC 25923, MIC=25 uM), but not against all other bacteria (both Gram-positive and Gram-negative) tested. Does not show activity against fungi, and against Leishmania species. It adopts an alpha-helical structure with very low amphipathicity in membrane environments. The sequence is that of Medusin-S1 from Phyllomedusa sauvagei (Sauvage's leaf frog).